Here is an 835-residue protein sequence, read N- to C-terminus: Adhesion G protein-coupled receptor E5 (835 aa).

Positions 1-20 are cleaved as a signal peptide; sequence MGGRVFLAFCVWLTLPGAET. The Extracellular portion of the chain corresponds to 21–552; the sequence is QDSRGCARWC…EDWKLTLITR (532 aa). Residues 22–63 form the EGF-like 1 domain; that stretch reads DSRGCARWCPQNSSCVNATACRCNPGFSSFSEIITTPTETCD. Intrachain disulfides connect C26–C36, C30–C42, C44–C62, C68–C82, C76–C91, C93–C114, C120–C133, C127–C142, C144–C158, C164–C177, C171–C186, C188–C207, C213–C226, C220–C235, and C237–C256. N-linked (GlcNAc...) asparagine glycosylation is found at N33 and N38. Residues 64–115 form the EGF-like 2; calcium-binding domain; sequence DINECATPSKVSCGKFSDCWNTEGSYDCVCSPGYEPVSGAKTFKNESENTCQ. N108 carries an N-linked (GlcNAc...) asparagine glycan. Positions 116-159 constitute an EGF-like 3; calcium-binding domain; the sequence is DVDECQQNPRLCKSYGTCVNTLGSYTCQCLPGFKFIPEDPKVCT. The EGF-like 4; calcium-binding domain occupies 160-208; it reads DVNECTSGQNPCHSSTHCLNNVGSYQCRCRPGWQPIPGSPNGPNNTVCE. N-linked (GlcNAc...) asparagine glycosylation is present at N203. Residues 209-257 form the EGF-like 5; calcium-binding domain; the sequence is DVDECSSGQHQCDSSTVCFNTVGSYSCRCRPGWKPRHGIPNNQKDTVCE. The GAIN-B domain occupies 349–543; the sequence is PFTYISPSNT…AILMAHYDVE (195 aa). Residues N371, N406, N413, N453, and N520 are each glycosylated (N-linked (GlcNAc...) asparagine). 2 disulfides stabilise this stretch: C495–C525 and C513–C527. A GPS region spans residues 495–543; sequence CAFWKSDSDRGGHWATEGCQVLGSKNGSTTCQCSHLSSFAILMAHYDVE. A helical membrane pass occupies residues 553-572; that stretch reads VGLALSLFCLLLCILTFLLV. The Cytoplasmic segment spans residues 573–581; the sequence is RPIQGSRTT. Residues 582–601 form a helical membrane-spanning segment; it reads IHLHLCICLFVGSTIFLAGI. Over 602-620 the chain is Extracellular; sequence ENEGGQVGLRCRLVAGLLH. A helical transmembrane segment spans residues 621-642; it reads YCFLAAFCWMSLEGLELYFLVV. Residues 643–653 are Cytoplasmic-facing; that stretch reads RVFQGQGLSTR. Residues 654-674 form a helical membrane-spanning segment; that stretch reads WLCLIGYGVPLLIVGVSAAIY. The Extracellular segment spans residues 675–691; it reads SKGYGRPRYCWLDFEQG. The helical transmembrane segment at 692–712 threads the bilayer; sequence FLWSFLGPVTFIILCNAVIFV. Topologically, residues 713-739 are cytoplasmic; that stretch reads TTVWKLTQKFSEINPDMKKLKKARALT. A helical membrane pass occupies residues 740-760; that stretch reads ITAIAQLFLLGCTWVFGLFIF. The Extracellular segment spans residues 761–766; that stretch reads DDRSLV. The chain crosses the membrane as a helical span at residues 767–789; sequence LTYVFTILNCLQGAFLYLLHCLL. Topologically, residues 790–835 are cytoplasmic; that stretch reads NKKVREEYRKWACLVAGGSKYSEFTSTTSGTGHNQTRALRASESGI. Residues 814–826 show a composition bias toward polar residues; sequence TSTTSGTGHNQTR. The disordered stretch occupies residues 814–835; the sequence is TSTTSGTGHNQTRALRASESGI. At S815 the chain carries Phosphoserine. T816 carries the phosphothreonine modification. S818 carries the phosphoserine modification. T825 bears the Phosphothreonine mark. Phosphoserine is present on residues S831 and S833.

Belongs to the G-protein coupled receptor 2 family. LN-TM7 subfamily. As to quaternary structure, forms a heterodimer, consisting of a large extracellular region (alpha subunit) non-covalently linked to a seven-transmembrane moiety (beta subunit). Interacts with complement decay-accelerating factor (DAF). The largest isoform (isoform 1) interacts with chondroitin sulfate. Proteolytically cleaved into 2 subunits, an extracellular alpha subunit and a seven-transmembrane subunit. Broadly expressed, found on most hematopoietic cells, including activated lymphocytes, monocytes, macrophages, dendritic cells, and granulocytes. Expressed also abundantly by smooth muscle cells. Expressed in thyroid, colorectal, gastric, esophageal and pancreatic carcinomas too. Expression are increased under inflammatory conditions in the CNS of multiple sclerosis and in synovial tissue of patients with rheumatoid arthritis. Increased expression of CD97 in the synovium is accompanied by detectable levels of soluble CD97 in the synovial fluid.

The protein localises to the cell membrane. The protein resides in the secreted. It localises to the extracellular space. In terms of biological role, receptor potentially involved in both adhesion and signaling processes early after leukocyte activation. Plays an essential role in leukocyte migration. In Homo sapiens (Human), this protein is Adhesion G protein-coupled receptor E5.